The sequence spans 441 residues: Arginine biosynthesis bifunctional protein ArgJ, mitochondrial (441 aa).

Residues T177, K203, T214, E303, N436, and S441 each coordinate substrate. The Nucleophile role is filled by T214.

This sequence belongs to the ArgJ family. As to quaternary structure, heterodimer of an alpha and a beta chain. Post-translationally, the alpha and beta chains are autoproteolytically processed from a single precursor protein within the mitochondrion.

It is found in the mitochondrion matrix. The enzyme catalyses N(2)-acetyl-L-ornithine + L-glutamate = N-acetyl-L-glutamate + L-ornithine. The catalysed reaction is L-glutamate + acetyl-CoA = N-acetyl-L-glutamate + CoA + H(+). It participates in amino-acid biosynthesis; L-arginine biosynthesis; L-ornithine and N-acetyl-L-glutamate from L-glutamate and N(2)-acetyl-L-ornithine (cyclic): step 1/1. The protein operates within amino-acid biosynthesis; L-arginine biosynthesis; N(2)-acetyl-L-ornithine from L-glutamate: step 1/4. Functionally, catalyzes two activities which are involved in the cyclic version of arginine biosynthesis: the synthesis of acetylglutamate from glutamate and acetyl-CoA, and of ornithine by transacetylation between acetylornithine and glutamate. This is Arginine biosynthesis bifunctional protein ArgJ, mitochondrial from Debaryomyces hansenii (strain ATCC 36239 / CBS 767 / BCRC 21394 / JCM 1990 / NBRC 0083 / IGC 2968) (Yeast).